A 710-amino-acid polypeptide reads, in one-letter code: Methionine--tRNA ligase (710 aa).

The short motif at Pro-16 to His-26 is the 'HIGH' region element. Residues Cys-147, Cys-150, Cys-160, and Cys-163 each coordinate Zn(2+). The 'KMSKS' region motif lies at Lys-350 to Ser-354. Lys-353 is an ATP binding site. Residues Asp-604–Gly-710 form the tRNA-binding domain.

It belongs to the class-I aminoacyl-tRNA synthetase family. MetG type 1 subfamily. As to quaternary structure, homodimer. It depends on Zn(2+) as a cofactor.

It localises to the cytoplasm. The enzyme catalyses tRNA(Met) + L-methionine + ATP = L-methionyl-tRNA(Met) + AMP + diphosphate. Its function is as follows. Is required not only for elongation of protein synthesis but also for the initiation of all mRNA translation through initiator tRNA(fMet) aminoacylation. The sequence is that of Methionine--tRNA ligase from Herminiimonas arsenicoxydans.